A 318-amino-acid polypeptide reads, in one-letter code: uncharacterized protein (318 aa).

Belongs to the asfivirus F317L family.

The protein resides in the virion. This is an uncharacterized protein from African swine fever virus (isolate Tick/Malawi/Lil 20-1/1983) (ASFV).